The following is a 183-amino-acid chain: uncharacterized protein (183 aa).

In terms of domain architecture, SIS spans M27–L170.

Belongs to the SIS family. PHI subfamily.

This is an uncharacterized protein from Archaeoglobus fulgidus (strain ATCC 49558 / DSM 4304 / JCM 9628 / NBRC 100126 / VC-16).